The following is a 267-amino-acid chain: Shikimate dehydrogenase (NADP(+)) (267 aa).

Shikimate-binding positions include 14–16 (SLS) and threonine 61. The active-site Proton acceptor is lysine 65. Residues asparagine 86 and aspartate 101 each contribute to the shikimate site. NADP(+)-binding positions include 126-130 (GAGGA), 150-155 (NRTPFK), and leucine 213. Tyrosine 215 lines the shikimate pocket. An NADP(+)-binding site is contributed by glycine 236.

Belongs to the shikimate dehydrogenase family. As to quaternary structure, homodimer.

The enzyme catalyses shikimate + NADP(+) = 3-dehydroshikimate + NADPH + H(+). It functions in the pathway metabolic intermediate biosynthesis; chorismate biosynthesis; chorismate from D-erythrose 4-phosphate and phosphoenolpyruvate: step 4/7. Functionally, involved in the biosynthesis of the chorismate, which leads to the biosynthesis of aromatic amino acids. Catalyzes the reversible NADPH linked reduction of 3-dehydroshikimate (DHSA) to yield shikimate (SA). The polypeptide is Shikimate dehydrogenase (NADP(+)) (Ruthia magnifica subsp. Calyptogena magnifica).